The following is a 303-amino-acid chain: Elongation factor Ts (303 aa).

The segment at 79–82 (TDFV) is involved in Mg(2+) ion dislocation from EF-Tu.

It belongs to the EF-Ts family.

It is found in the cytoplasm. Associates with the EF-Tu.GDP complex and induces the exchange of GDP to GTP. It remains bound to the aminoacyl-tRNA.EF-Tu.GTP complex up to the GTP hydrolysis stage on the ribosome. The sequence is that of Elongation factor Ts from Syntrophotalea carbinolica (strain DSM 2380 / NBRC 103641 / GraBd1) (Pelobacter carbinolicus).